The primary structure comprises 141 residues: Transmembrane protein 216 (141 aa).

A run of 4 helical transmembrane segments spans residues 15–35 (ILFF…LLIF), 49–69 (LVLD…RLFF), 82–102 (LGIS…YLLL), and 115–135 (SILL…LATF).

As to quaternary structure, part of the tectonic-like complex (also named B9 complex). Interacts with TMEM107.

It is found in the membrane. It localises to the cytoplasm. Its subcellular location is the cytoskeleton. The protein resides in the cilium basal body. Functionally, part of the tectonic-like complex which is required for tissue-specific ciliogenesis and may regulate ciliary membrane composition. The chain is Transmembrane protein 216 (Tmem216) from Rattus norvegicus (Rat).